The primary structure comprises 113 residues: Iron-sulfur cluster insertion protein ErpA (113 aa).

3 residues coordinate iron-sulfur cluster: Cys41, Cys105, and Cys107.

It belongs to the HesB/IscA family. As to quaternary structure, homodimer. Iron-sulfur cluster serves as cofactor.

Its function is as follows. Required for insertion of 4Fe-4S clusters for at least IspG. This Actinobacillus pleuropneumoniae serotype 7 (strain AP76) protein is Iron-sulfur cluster insertion protein ErpA.